Consider the following 51-residue polypeptide: Large ribosomal subunit protein eL39 (51 aa).

The protein belongs to the eukaryotic ribosomal protein eL39 family.

The sequence is that of Large ribosomal subunit protein eL39 from Pyrobaculum islandicum (strain DSM 4184 / JCM 9189 / GEO3).